The chain runs to 254 residues: Phosphatidylglycerol--prolipoprotein diacylglyceryl transferase (254 aa).

A run of 3 helical transmembrane segments spans residues 11-31 (LAIR…LLLA), 49-69 (FLIA…IFEF), and 84-104 (QGGL…YIYL). R130 is an a 1,2-diacyl-sn-glycero-3-phospho-(1'-sn-glycerol) binding site. 3 helical membrane passes run 169–189 (PTFL…VYLL), 196–216 (GIVF…IEGL), and 228–248 (VAQL…YNII).

The protein belongs to the Lgt family.

The protein resides in the cell membrane. It catalyses the reaction L-cysteinyl-[prolipoprotein] + a 1,2-diacyl-sn-glycero-3-phospho-(1'-sn-glycerol) = an S-1,2-diacyl-sn-glyceryl-L-cysteinyl-[prolipoprotein] + sn-glycerol 1-phosphate + H(+). It participates in protein modification; lipoprotein biosynthesis (diacylglyceryl transfer). Catalyzes the transfer of the diacylglyceryl group from phosphatidylglycerol to the sulfhydryl group of the N-terminal cysteine of a prolipoprotein, the first step in the formation of mature lipoproteins. In Clostridium botulinum (strain Loch Maree / Type A3), this protein is Phosphatidylglycerol--prolipoprotein diacylglyceryl transferase.